The primary structure comprises 98 residues: Large ribosomal subunit protein eL21 (98 aa).

This sequence belongs to the eukaryotic ribosomal protein eL21 family.

This Methanocorpusculum labreanum (strain ATCC 43576 / DSM 4855 / Z) protein is Large ribosomal subunit protein eL21.